A 700-amino-acid chain; its full sequence is Acetyl-coenzyme A carboxylase carboxyl transferase subunit beta, chloroplastic (700 aa).

C34, C37, C53, and C56 together coordinate Zn(2+). A C4-type zinc finger spans residues 34-56 (CENCETLIYKKSLLEQKGVCAEC). In terms of domain architecture, CoA carboxyltransferase N-terminal spans 445-700 (KKGRDTKDTE…ETIEIYMYGD (256 aa)).

It belongs to the AccD/PCCB family. As to quaternary structure, acetyl-CoA carboxylase is a heterohexamer composed of biotin carboxyl carrier protein, biotin carboxylase and 2 subunits each of ACCase subunit alpha and ACCase plastid-coded subunit beta (accD). Zn(2+) serves as cofactor.

The protein resides in the plastid. It is found in the chloroplast stroma. The catalysed reaction is N(6)-carboxybiotinyl-L-lysyl-[protein] + acetyl-CoA = N(6)-biotinyl-L-lysyl-[protein] + malonyl-CoA. It participates in lipid metabolism; malonyl-CoA biosynthesis; malonyl-CoA from acetyl-CoA: step 1/1. In terms of biological role, component of the acetyl coenzyme A carboxylase (ACC) complex. Biotin carboxylase (BC) catalyzes the carboxylation of biotin on its carrier protein (BCCP) and then the CO(2) group is transferred by the transcarboxylase to acetyl-CoA to form malonyl-CoA. This is Acetyl-coenzyme A carboxylase carboxyl transferase subunit beta, chloroplastic from Cryptomeria japonica (Japanese cedar).